An 873-amino-acid chain; its full sequence is MYMSTDEIRRAFLAFFESKGHQIVESSSLVPANDPTLLFTNAGMNQFKDTFLGIEKRSYTRATTAQRCVRAGGKHNDLENVGFTARHHTFFEMLGNFSFGDYFKQDAIKYAWEFLTDVLGLPQDRLLVTIYETDDEAFDIWNKEMGIPADRIVRIGDNKGAPYASDNFWQMGDTGPCGPCSEIFYDHGEHIWGGRPGTPEEDGDRFIEIWNNVFMQFNRQADGTMEPLPKPSVDTGMGIERIAAIMQGVHSNYEIDIFQTLIKKSAEVIGYEDLSNQSLRVVADHIRSCAFLIVDGVMPSNEGRGYVLRRIIRRAVRHGNKLGASGAFFYKLVGPLAEIMGTAGDELKKRQALVEKILKIEEDNFGRTLDRGLTILNDALDNLSGKELDGETVFKLYDTYGFPADLTNDVARERDFTIDEEGFNNAMEAQRQRAREAGKFGVDYNESIKVDVNTEFCGYTGTAAQSSIVALYRDGEAVDSILAGEDALIILDNTPFYAESGGQCGDAGVLTAENTVFNVSDTQKFGAAIGHQGSLVQGALNVGDKLEAQVDVVRRTAITLNHSATHLLHSALRNLLGEHVAQKGSLVKPDALRFDFSNLEAVKPEQLREIERVVNEQIRLNHSIDTNIMDIESAKQKGAMALFGEKYDDEVRVLSMGEFSTELCGGIHAKNTGDIGLFKITSEGGIAAGIRRIEAVTGAAAIDALHAQEALLSETASIVKSDAASVATKVSALLAHSKQLEKDIQQLQDKLAAQESAGLLDQAKEINGVKVLITQLDGADNKALRGMLDEIKNKLGSGIVVLGNVSGDKVGLIVGVTKDLTGKVKAGELVNMVAQQVGGKGGGRPDMAQAGGTDAAALPAALESVTPWLTEKL.

H562, H566, C664, and H668 together coordinate Zn(2+).

This sequence belongs to the class-II aminoacyl-tRNA synthetase family. Zn(2+) is required as a cofactor.

It localises to the cytoplasm. It catalyses the reaction tRNA(Ala) + L-alanine + ATP = L-alanyl-tRNA(Ala) + AMP + diphosphate. In terms of biological role, catalyzes the attachment of alanine to tRNA(Ala) in a two-step reaction: alanine is first activated by ATP to form Ala-AMP and then transferred to the acceptor end of tRNA(Ala). Also edits incorrectly charged Ser-tRNA(Ala) and Gly-tRNA(Ala) via its editing domain. This chain is Alanine--tRNA ligase, found in Photobacterium profundum (strain SS9).